A 442-amino-acid polypeptide reads, in one-letter code: Ribosomal protein uS12 methylthiotransferase RimO (442 aa).

An MTTase N-terminal domain is found at 5-117 (PSIGVVSLGC…VLDAIHAALP (113 aa)). [4Fe-4S] cluster is bound by residues cysteine 14, cysteine 50, cysteine 79, cysteine 148, cysteine 152, and cysteine 155. Residues 134 to 371 (LTPPHYAYLK…MAVQEAISRQ (238 aa)) form the Radical SAM core domain. Residues 374–441 (QRRVGQRQRV…AHDLYGMVVS (68 aa)) form the TRAM domain.

The protein belongs to the methylthiotransferase family. RimO subfamily. It depends on [4Fe-4S] cluster as a cofactor.

The protein resides in the cytoplasm. The catalysed reaction is L-aspartate(89)-[ribosomal protein uS12]-hydrogen + (sulfur carrier)-SH + AH2 + 2 S-adenosyl-L-methionine = 3-methylsulfanyl-L-aspartate(89)-[ribosomal protein uS12]-hydrogen + (sulfur carrier)-H + 5'-deoxyadenosine + L-methionine + A + S-adenosyl-L-homocysteine + 2 H(+). Its function is as follows. Catalyzes the methylthiolation of an aspartic acid residue of ribosomal protein uS12. In Acidithiobacillus ferrooxidans (strain ATCC 53993 / BNL-5-31) (Leptospirillum ferrooxidans (ATCC 53993)), this protein is Ribosomal protein uS12 methylthiotransferase RimO.